A 498-amino-acid chain; its full sequence is Peptidase inhibitor 16 (498 aa).

The signal sequence occupies residues 1–29 (MHGSCSPWVMLPPPLLLLLLLIATGPTTA). The SCP domain occupies 39 to 167 (VDLHNQYRAQ…ANIHLLVCNY (129 aa)). Asn116 is a glycosylation site (N-linked (GlcNAc...) asparagine). Disordered regions lie at residues 204-277 (NPEK…GPSS), 317-407 (PKSM…SPLS), and 419-467 (ERGG…ENPE). 2 stretches are compositionally biased toward polar residues: residues 218-277 (VPST…GPSS) and 344-353 (LTESGESVPQ). Low complexity predominate over residues 367-380 (PEAILPEAEAAPTE). Residues 383–397 (VELREPEAESPKAES) show a composition bias toward basic and acidic residues. Positions 437–447 (SLPTFPSASGN) are enriched in polar residues. N-linked (GlcNAc...) asparagine glycosylation occurs at Asn447.

Belongs to the CRISP family. As to quaternary structure, interacts with PSP94/MSMB. Post-translationally, N-glycosylated. Expressed strongly in aorta and skin, and weakly in adipose tissue (at protein level). In heart, found in the extracellular space surrounding cardiomyocytes (at protein level).

It localises to the secreted. Functionally, may inhibit cardiomyocyte growth. The polypeptide is Peptidase inhibitor 16 (Pi16) (Mus musculus (Mouse)).